The following is a 370-amino-acid chain: Histidinol-phosphate aminotransferase (370 aa).

N6-(pyridoxal phosphate)lysine is present on Lys-223.

This sequence belongs to the class-II pyridoxal-phosphate-dependent aminotransferase family. Histidinol-phosphate aminotransferase subfamily. As to quaternary structure, homodimer. Pyridoxal 5'-phosphate serves as cofactor.

The enzyme catalyses L-histidinol phosphate + 2-oxoglutarate = 3-(imidazol-4-yl)-2-oxopropyl phosphate + L-glutamate. Its pathway is amino-acid biosynthesis; L-histidine biosynthesis; L-histidine from 5-phospho-alpha-D-ribose 1-diphosphate: step 7/9. In Methylobacterium nodulans (strain LMG 21967 / CNCM I-2342 / ORS 2060), this protein is Histidinol-phosphate aminotransferase.